The chain runs to 148 residues: Large ribosomal subunit protein bL9 (148 aa).

This sequence belongs to the bacterial ribosomal protein bL9 family.

Binds to the 23S rRNA. The polypeptide is Large ribosomal subunit protein bL9 (Bifidobacterium longum (strain DJO10A)).